We begin with the raw amino-acid sequence, 524 residues long: Nedd8-activating enzyme E1 regulatory subunit (524 aa).

This sequence belongs to the ubiquitin-activating E1 family. ULA1 subfamily. Heterodimer of Uba3 and APP-BP1. The complex binds Nedd8 and UbcE2M. Interacts with Appl (via the intracellular domain, ICD).

Its pathway is protein modification; protein neddylation. Its function is as follows. Regulatory subunit of the dimeric Uba3-APP-BP1 E1 enzyme. E1 activates Nedd8 by first adenylating its C-terminal glycine residue with ATP, thereafter linking this residue to the side chain of the catalytic cysteine, yielding a Nedd8-Uba3 thioester and free AMP. E1 finally transfers Nedd8 to the catalytic cysteine of UbcE2M. Required for Cul1 and Cul3 neddylation. Appl and APP-BP1 interact antagonistically during development. The protein is Nedd8-activating enzyme E1 regulatory subunit (APP-BP1) of Drosophila melanogaster (Fruit fly).